The following is a 347-amino-acid chain: NADH-ubiquinone oxidoreductase chain 2 (347 aa).

The next 10 helical transmembrane spans lie at 3-23, 59-79, 95-115, 127-147, 149-169, 178-198, 200-220, 241-261, 274-294, and 325-345; these read PLTLIIIMFTLFMGTMITVFS, YFLTQATASMILMMAITLNIL, PVLITLALIIKLGMAPFHFWV, GLILLTWQKLAPLSILYQISP, INPTMMMSVAILSIMVGGWGG, ILAYSSIAHMGWMAAIITFNP, TMVLNLIIYILMTIPMFMMFM, VSTILITLMSLGGLPPLTGFI, GNIILPTAMAMLALLNLYFYM, and LITPLIILSTMLLPLTPALSV.

This sequence belongs to the complex I subunit 2 family. As to quaternary structure, core subunit of respiratory chain NADH dehydrogenase (Complex I) which is composed of 45 different subunits. Interacts with TMEM242.

The protein localises to the mitochondrion inner membrane. It catalyses the reaction a ubiquinone + NADH + 5 H(+)(in) = a ubiquinol + NAD(+) + 4 H(+)(out). Its function is as follows. Core subunit of the mitochondrial membrane respiratory chain NADH dehydrogenase (Complex I) which catalyzes electron transfer from NADH through the respiratory chain, using ubiquinone as an electron acceptor. Essential for the catalytic activity and assembly of complex I. This is NADH-ubiquinone oxidoreductase chain 2 from Oryctolagus cuniculus (Rabbit).